Reading from the N-terminus, the 1571-residue chain is Pentafunctional AROM polypeptide (1571 aa).

The 3-dehydroquinate synthase stretch occupies residues 1 to 380 (MTSVEKVSIL…YQLKAHQVSK (380 aa)). NAD(+) is bound by residues 43 to 45 (DTN), 81 to 84 (ENNK), 112 to 114 (GGV), and aspartate 117. Residue arginine 128 participates in 7-phospho-2-dehydro-3-deoxy-D-arabino-heptonate binding. An NAD(+)-binding site is contributed by 137 to 138 (TS). The 7-phospho-2-dehydro-3-deoxy-D-arabino-heptonate site is built by aspartate 144 and lysine 150. Lysine 159 contributes to the NAD(+) binding site. Asparagine 160 provides a ligand contact to 7-phospho-2-dehydro-3-deoxy-D-arabino-heptonate. NAD(+) is bound by residues 177 to 180 (FLET) and asparagine 188. Glutamate 192 lines the Zn(2+) pocket. 7-phospho-2-dehydro-3-deoxy-D-arabino-heptonate is bound by residues 192-195 (EVVK) and lysine 244. The Proton acceptor; for 3-dehydroquinate synthase activity role is filled by glutamate 254. Residues 258–262 (RNLLN) and histidine 265 contribute to the 7-phospho-2-dehydro-3-deoxy-D-arabino-heptonate site. Histidine 265 serves as a coordination point for Zn(2+). Catalysis depends on histidine 269, which acts as the Proton acceptor; for 3-dehydroquinate synthase activity. 7-phospho-2-dehydro-3-deoxy-D-arabino-heptonate contacts are provided by histidine 281 and lysine 352. Position 281 (histidine 281) interacts with Zn(2+). The EPSP synthase stretch occupies residues 393-843 (VHPFDDKLIP…WDILHTKFKV (451 aa)). The active-site For EPSP synthase activity is the cysteine 825. Positions 868–1058 (KRSIIVIGMR…IPKKRSFYTS (191 aa)) are shikimate kinase. 875–882 (GMRGAGKS) contributes to the ATP binding site. The segment at 1059–1271 (LTFSDLTEVA…GNEGALDVAQ (213 aa)) is 3-dehydroquinase. Lysine 1204 acts as the Schiff-base intermediate with substrate; for 3-dehydroquinate dehydratase activity in catalysis. The shikimate dehydrogenase stretch occupies residues 1284 to 1571 (EKHFWIVGNP…DVVHDAVVNQ (288 aa)).

It in the N-terminal section; belongs to the sugar phosphate cyclases superfamily. Dehydroquinate synthase family. This sequence in the 2nd section; belongs to the EPSP synthase family. In the 3rd section; belongs to the shikimate kinase family. The protein in the 4th section; belongs to the type-I 3-dehydroquinase family. It in the C-terminal section; belongs to the shikimate dehydrogenase family. Homodimer. The cofactor is Zn(2+).

The protein resides in the cytoplasm. The enzyme catalyses 7-phospho-2-dehydro-3-deoxy-D-arabino-heptonate = 3-dehydroquinate + phosphate. It catalyses the reaction 3-dehydroquinate = 3-dehydroshikimate + H2O. It carries out the reaction shikimate + NADP(+) = 3-dehydroshikimate + NADPH + H(+). The catalysed reaction is shikimate + ATP = 3-phosphoshikimate + ADP + H(+). The enzyme catalyses 3-phosphoshikimate + phosphoenolpyruvate = 5-O-(1-carboxyvinyl)-3-phosphoshikimate + phosphate. Its pathway is metabolic intermediate biosynthesis; chorismate biosynthesis; chorismate from D-erythrose 4-phosphate and phosphoenolpyruvate: step 2/7. The protein operates within metabolic intermediate biosynthesis; chorismate biosynthesis; chorismate from D-erythrose 4-phosphate and phosphoenolpyruvate: step 3/7. It participates in metabolic intermediate biosynthesis; chorismate biosynthesis; chorismate from D-erythrose 4-phosphate and phosphoenolpyruvate: step 4/7. It functions in the pathway metabolic intermediate biosynthesis; chorismate biosynthesis; chorismate from D-erythrose 4-phosphate and phosphoenolpyruvate: step 5/7. Its pathway is metabolic intermediate biosynthesis; chorismate biosynthesis; chorismate from D-erythrose 4-phosphate and phosphoenolpyruvate: step 6/7. In terms of biological role, the AROM polypeptide catalyzes 5 consecutive enzymatic reactions in prechorismate polyaromatic amino acid biosynthesis. The polypeptide is Pentafunctional AROM polypeptide (Scheffersomyces stipitis (strain ATCC 58785 / CBS 6054 / NBRC 10063 / NRRL Y-11545) (Yeast)).